Consider the following 323-residue polypeptide: Acetyl-coenzyme A carboxylase carboxyl transferase subunit alpha (323 aa).

Residues Asn32 to Ser293 form the CoA carboxyltransferase C-terminal domain.

Belongs to the AccA family. As to quaternary structure, acetyl-CoA carboxylase is a heterohexamer composed of biotin carboxyl carrier protein (AccB), biotin carboxylase (AccC) and two subunits each of ACCase subunit alpha (AccA) and ACCase subunit beta (AccD).

The protein localises to the cytoplasm. It catalyses the reaction N(6)-carboxybiotinyl-L-lysyl-[protein] + acetyl-CoA = N(6)-biotinyl-L-lysyl-[protein] + malonyl-CoA. Its pathway is lipid metabolism; malonyl-CoA biosynthesis; malonyl-CoA from acetyl-CoA: step 1/1. In terms of biological role, component of the acetyl coenzyme A carboxylase (ACC) complex. First, biotin carboxylase catalyzes the carboxylation of biotin on its carrier protein (BCCP) and then the CO(2) group is transferred by the carboxyltransferase to acetyl-CoA to form malonyl-CoA. This chain is Acetyl-coenzyme A carboxylase carboxyl transferase subunit alpha, found in Alcanivorax borkumensis (strain ATCC 700651 / DSM 11573 / NCIMB 13689 / SK2).